We begin with the raw amino-acid sequence, 570 residues long: Periplasmic trehalase (570 aa).

The first 34 residues, 1-34 (MIPPEIRRSVLLQKAIKLALAGTLLTFASFSATA), serve as a signal peptide directing secretion. Residues Arg159, 166 to 167 (WD), Asn203, 212 to 214 (RSQ), 284 to 286 (RPE), and Gly317 contribute to the substrate site. Residues Asp319 and Glu503 each act as proton donor/acceptor in the active site. Glu518 is a binding site for substrate. Residues 544 to 570 (KPCDSVPSTRPASLSATPTKTPSAATQ) are disordered. Over residues 554 to 570 (PASLSATPTKTPSAATQ) the composition is skewed to low complexity.

Belongs to the glycosyl hydrolase 37 family. In terms of assembly, monomer.

It localises to the periplasm. The catalysed reaction is alpha,alpha-trehalose + H2O = alpha-D-glucose + beta-D-glucose. In terms of biological role, provides the cells with the ability to utilize trehalose at high osmolarity by splitting it into glucose molecules that can subsequently be taken up by the phosphotransferase-mediated uptake system. The polypeptide is Periplasmic trehalase (Salmonella dublin (strain CT_02021853)).